The primary structure comprises 615 residues: Chaperone protein DnaK (615 aa).

The residue at position 177 (Thr177) is a Phosphothreonine; by autocatalysis. Residues 567-615 are disordered; that stretch reads TKESQGIAMKAYQKAQEKQAQEKGTQENTTAKNEKPQDEVVDADFEEKK. Residues 581–591 show a composition bias toward basic and acidic residues; that stretch reads AQEKQAQEKGT. A compositionally biased stretch (acidic residues) spans 605-615; the sequence is EVVDADFEEKK.

It belongs to the heat shock protein 70 family.

In terms of biological role, acts as a chaperone. The protein is Chaperone protein DnaK of Onion yellows phytoplasma (strain OY-M).